The following is a 534-amino-acid chain: Signal recognition particle subunit SRP54 (534 aa).

Residues 1 to 296 are G-domain; the sequence is MVLQDLGRRI…EPKAFIQKLL (296 aa). Residues 109-116, 191-195, and 249-252 contribute to the GTP site; these read GLQGAGKT, DTSGR, and TKTD. Positions 297 to 534 are M-domain; that stretch reads GMGDMAGLVE…GGGGGRGRGR (238 aa).

The protein belongs to the GTP-binding SRP family. SRP54 subfamily. Fungal signal recognition particle consists of a 7S RNA molecule (scR1) and at least six protein subunits: srp72, srp68, srpA/srp54, sec65, srp21 and srp14.

It localises to the cytoplasm. It is found in the endoplasmic reticulum. The catalysed reaction is GTP + H2O = GDP + phosphate + H(+). Signal-recognition-particle (SRP) assembly has a crucial role in targeting secretory proteins to the rough endoplasmic reticulum (ER) membrane. SRP is required for the cotranslational protein translocation for ER import and preferentially recognizes strongly hydrophobic signal sequences. It is involved in targeting the nascent chain-ribosome (RNC) complex to the ER and is proposed to participate in the arrest of nascent chain elongation during membrane targeting. srpA/srp54 binds to the signal sequence of presecretory protein when they emerge from the ribosomes. srpA/srp54 interacts with the scR1 RNA and mediates the association of the resulting SRP-RNC complex with the signal recognition particle receptor (SR) via its alpha subunit srp101. Both, srpA/srp54 and srp101, are locked in their GTP bound forms in the SRP-RNC-SR complex, which dissociates upon transferring the signal sequence to the protein-conducting channel (translocon). After signal sequence transfer, srpA/srp54 and srp101 act as reciprocal GTPase-activating proteins (GAPs), thereby resolving their association. This Aspergillus niger protein is Signal recognition particle subunit SRP54 (srpA).